The chain runs to 947 residues: Protein translocase subunit SecA (947 aa).

ATP-binding positions include Q87, G105 to T109, and D494. Residues T860–R947 form a disordered region. Over residues A870–A885 the composition is skewed to low complexity. Composition is skewed to basic and acidic residues over residues E903–A914 and A922–A931.

It belongs to the SecA family. As to quaternary structure, monomer and homodimer. Part of the essential Sec protein translocation apparatus which comprises SecA, SecYEG and auxiliary proteins SecDF. Other proteins may also be involved.

It is found in the cell membrane. The protein localises to the cytoplasm. It carries out the reaction ATP + H2O + cellular proteinSide 1 = ADP + phosphate + cellular proteinSide 2.. In terms of biological role, part of the Sec protein translocase complex. Interacts with the SecYEG preprotein conducting channel. Has a central role in coupling the hydrolysis of ATP to the transfer of proteins into and across the cell membrane, serving as an ATP-driven molecular motor driving the stepwise translocation of polypeptide chains across the membrane. The sequence is that of Protein translocase subunit SecA from Rhodococcus erythropolis (strain PR4 / NBRC 100887).